We begin with the raw amino-acid sequence, 383 residues long: UDP-D-xylose:L-fucose alpha-1,3-D-xylosyltransferase 3 (383 aa).

The Cytoplasmic segment spans residues 1–20; it reads MAQQSQRPISNRHISLLNRN. The chain crosses the membrane as a helical; Signal-anchor for type II membrane protein span at residues 21 to 41; the sequence is GLILLLLLALFVILGVFLPLT. Over 42–383 the chain is Lumenal; sequence KSSLFMFPNT…KNRGKKHKLP (342 aa). N50, N82, and N157 each carry an N-linked (GlcNAc...) asparagine glycan. A DXD motif motif is present at residues 180-182; sequence DVD. N212, N258, N301, N306, N357, and N364 each carry an N-linked (GlcNAc...) asparagine glycan.

The protein belongs to the glycosyltransferase 77 family. Mn(2+) serves as cofactor. The cofactor is Mg(2+). In terms of processing, glycosylated. In terms of tissue distribution, expressed around trichome support cells in the adaxial epidermis of rosette leaves, in cauline leaves, petals and both the proximal and distal ends of siliques.

It is found in the golgi apparatus membrane. Functionally, catalyzes the transfer of D-xylose from UDP-alpha-D-xylose onto L-fucose. Probably involved in the biosynthesis of rhamnogalacturonan II (RG-II) through xylosylation of the internal fucose moiety of the A-chain of RG-II, a structurally complex pectic polysaccharide of the primary cell wall. RG-II is essential for the cell wall integrity of rapidly growing tissues such as roots and pollen tube growth and elongation. This is UDP-D-xylose:L-fucose alpha-1,3-D-xylosyltransferase 3 from Arabidopsis thaliana (Mouse-ear cress).